A 68-amino-acid polypeptide reads, in one-letter code: Conotoxin reg3.14 (68 aa).

Residues Met-1–Pro-22 form the signal peptide. A propeptide spanning residues Leu-23 to Arg-52 is cleaved from the precursor. 3 disulfides stabilise this stretch: Cys-53-Cys-68, Cys-54-Cys-64, and Cys-59-Cys-67.

It belongs to the conotoxin M superfamily. Expressed by the venom duct.

The protein resides in the secreted. This chain is Conotoxin reg3.14, found in Conus regius (Crown cone).